A 688-amino-acid chain; its full sequence is Elongation factor G (688 aa).

Residues 8–282 (EKTRNIGIMA…AIIDYLPSPM (275 aa)) form the tr-type G domain. Residues 17 to 24 (AHIDAGKT), 81 to 85 (DTPGH), and 135 to 138 (NKMD) contribute to the GTP site.

Belongs to the TRAFAC class translation factor GTPase superfamily. Classic translation factor GTPase family. EF-G/EF-2 subfamily.

The protein resides in the cytoplasm. Its function is as follows. Catalyzes the GTP-dependent ribosomal translocation step during translation elongation. During this step, the ribosome changes from the pre-translocational (PRE) to the post-translocational (POST) state as the newly formed A-site-bound peptidyl-tRNA and P-site-bound deacylated tRNA move to the P and E sites, respectively. Catalyzes the coordinated movement of the two tRNA molecules, the mRNA and conformational changes in the ribosome. In Apple proliferation phytoplasma, this protein is Elongation factor G (fusA).